Consider the following 200-residue polypeptide: Large ribosomal subunit protein uL4c (200 aa).

Residues 45–71 (RAEIRGGGRKPWKQKGTGRARAGSRRS) form a disordered region. The segment covering 51-68 (GGRKPWKQKGTGRARAGS) has biased composition (basic residues).

This sequence belongs to the universal ribosomal protein uL4 family. In terms of assembly, part of the 50S ribosomal subunit.

It is found in the plastid. Its subcellular location is the chloroplast. Its function is as follows. Probably binds the 23S rRNA. The chain is Large ribosomal subunit protein uL4c (rpl4) from Cyanidioschyzon merolae (strain NIES-3377 / 10D) (Unicellular red alga).